The sequence spans 165 residues: Phosphopantetheine adenylyltransferase (165 aa).

Thr-9 provides a ligand contact to substrate. ATP is bound by residues 9-10 and His-17; that span reads TF. The substrate site is built by Lys-41, Leu-78, and Arg-92. ATP is bound by residues 93–95, Glu-103, and 128–134; these read GLR and RQAIASK.

The protein belongs to the bacterial CoaD family. As to quaternary structure, homohexamer. The cofactor is Mg(2+).

It is found in the cytoplasm. It carries out the reaction (R)-4'-phosphopantetheine + ATP + H(+) = 3'-dephospho-CoA + diphosphate. The protein operates within cofactor biosynthesis; coenzyme A biosynthesis; CoA from (R)-pantothenate: step 4/5. Reversibly transfers an adenylyl group from ATP to 4'-phosphopantetheine, yielding dephospho-CoA (dPCoA) and pyrophosphate. The sequence is that of Phosphopantetheine adenylyltransferase from Ruegeria pomeroyi (strain ATCC 700808 / DSM 15171 / DSS-3) (Silicibacter pomeroyi).